Reading from the N-terminus, the 309-residue chain is Elongation factor Ts (309 aa).

The segment at 82–85 (TDFV) is involved in Mg(2+) ion dislocation from EF-Tu.

This sequence belongs to the EF-Ts family.

The protein resides in the cytoplasm. Associates with the EF-Tu.GDP complex and induces the exchange of GDP to GTP. It remains bound to the aminoacyl-tRNA.EF-Tu.GTP complex up to the GTP hydrolysis stage on the ribosome. In Rickettsia akari (strain Hartford), this protein is Elongation factor Ts.